The chain runs to 189 residues: GMP synthase [glutamine-hydrolyzing] subunit A (189 aa).

Positions 1–189 (MIVILNNGGQ…CKVCGFKFNE (189 aa)) constitute a Glutamine amidotransferase type-1 domain. C76 serves as the catalytic Nucleophile. Residues H163 and E165 contribute to the active site.

In terms of assembly, heterodimer composed of a glutamine amidotransferase subunit (A) and a GMP-binding subunit (B).

The enzyme catalyses XMP + L-glutamine + ATP + H2O = GMP + L-glutamate + AMP + diphosphate + 2 H(+). Its pathway is purine metabolism; GMP biosynthesis; GMP from XMP (L-Gln route): step 1/1. Catalyzes the synthesis of GMP from XMP. The polypeptide is GMP synthase [glutamine-hydrolyzing] subunit A (Methanococcus vannielii (strain ATCC 35089 / DSM 1224 / JCM 13029 / OCM 148 / SB)).